A 385-amino-acid chain; its full sequence is GTP cyclohydrolase-2 (385 aa).

Residues 1–189 (MYADAPSDSA…RDIADYRVHV (189 aa)) are DHBP synthase-like. Positions 190–385 (VRTLRRVAEA…TKAERSGHMF (196 aa)) are GTP cyclohydrolase II. A GTP-binding site is contributed by 240 to 244 (RLHSE). 3 residues coordinate Zn(2+): C245, C256, and C258. Residues Q261, 283 to 285 (EGR), and T305 each bind GTP. Catalysis depends on D317, which acts as the Proton acceptor. The active-site Nucleophile is the R319. GTP-binding residues include T340 and K345.

It in the N-terminal section; belongs to the DHBP synthase family. In the C-terminal section; belongs to the GTP cyclohydrolase II family. It depends on Zn(2+) as a cofactor.

It catalyses the reaction GTP + 4 H2O = 2,5-diamino-6-hydroxy-4-(5-phosphoribosylamino)-pyrimidine + formate + 2 phosphate + 3 H(+). It participates in cofactor biosynthesis; riboflavin biosynthesis; 5-amino-6-(D-ribitylamino)uracil from GTP: step 1/4. Functionally, catalyzes the conversion of GTP to 2,5-diamino-6-ribosylamino-4(3H)-pyrimidinone 5'-phosphate (DARP), formate and pyrophosphate. The chain is GTP cyclohydrolase-2 (ribA) from Azospirillum brasilense.